A 154-amino-acid chain; its full sequence is UPF0756 membrane protein EAT1b_0668 (154 aa).

5 consecutive transmembrane segments (helical) span residues 5–25 (LFLLMLVLIGVISNNQSVIIA), 52–72 (WGVTIITIAVLVPIATGDIGF), 82–102 (PVGIVAFASGMFVAIAAGQGV), 107–127 (VDPVVTTALLAGTILAVGFMK), and 129–149 (IPVGPLVGAGIAALILGGYQV).

It belongs to the UPF0756 family.

It is found in the cell membrane. This chain is UPF0756 membrane protein EAT1b_0668, found in Exiguobacterium sp. (strain ATCC BAA-1283 / AT1b).